The chain runs to 86 residues: Apolipoprotein C-I (86 aa).

A signal peptide spans 1–26; that stretch reads MRLFLSLPVLVVVLLMILEGPGPAQG.

This sequence belongs to the apolipoprotein C1 family.

It localises to the secreted. In terms of biological role, inhibitor of lipoprotein binding to the low density lipoprotein (LDL) receptor, LDL receptor-related protein, and very low density lipoprotein (VLDL) receptor. Associates with high density lipoproteins (HDL) and the triacylglycerol-rich lipoproteins in the plasma and makes up about 10% of the protein of the VLDL and 2% of that of HDL. Appears to interfere directly with fatty acid uptake and is also the major plasma inhibitor of cholesteryl ester transfer protein (CETP). Binds free fatty acids and reduces their intracellular esterification. Modulates the interaction of APOE with beta-migrating VLDL and inhibits binding of beta-VLDL to the LDL receptor-related protein. This chain is Apolipoprotein C-I (APOC1), found in Saimiri boliviensis boliviensis (Bolivian squirrel monkey).